We begin with the raw amino-acid sequence, 828 residues long: Transcription factor SOX-6 (828 aa).

A disordered region spans residues 1-51 (MSSKQATSPFACAADGEDAMTQDLTSREKEEGSDQHVASHLPLHPIMHNKP). Residues 25–34 (TSREKEEGSD) are compositionally biased toward basic and acidic residues. T119 carries the post-translational modification Phosphothreonine. Residues 184 to 262 (LAEKERQLST…LLQQQIQVQG (79 aa)) adopt a coiled-coil conformation. The interval 380–470 (SPGAKMPSTP…KSSIPSPIGG (91 aa)) is disordered. A compositionally biased stretch (polar residues) spans 393-402 (NTAGTVSPTG). S399 carries the post-translational modification Phosphoserine. Residue T401 is modified to Phosphothreonine. Glycyl lysine isopeptide (Lys-Gly) (interchain with G-Cter in SUMO) cross-links involve residues K404 and K417. Phosphoserine is present on residues S439 and S442. The segment covering 439 to 461 (SPTSPTQNLFPASKTSPVNLPNK) has biased composition (polar residues). Positions 621-689 (IKRPMNAFMV…IHLEKYPNYK (69 aa)) form a DNA-binding region, HMG box. The segment covering 753–781 (TPSPQMTSDCSSTSASPEPSLPVIQSTYG) has biased composition (polar residues). A disordered region spans residues 753–828 (TPSPQMTSDC…NEAPEAVSAN (76 aa)). Over residues 796 to 809 (NGEDEMEMYDDYED) the composition is skewed to acidic residues.

Homodimer. Interacts with DAZAP2. May interact with CENPK. Post-translationally, sumoylation inhibits the transcriptional activity. In terms of tissue distribution, expressed in a wide variety of tissues, most abundantly in skeletal musclen.

The protein localises to the nucleus. The protein resides in the cytoplasm. Functionally, transcription factor that plays a key role in several developmental processes, including neurogenesis, chondrocytes differentiation and cartilage formation. Specifically binds the 5'-AACAAT-3' DNA motif present in enhancers and super-enhancers and promotes expression of genes important for chondrogenesis. Required for overt chondrogenesis when condensed prechondrocytes differentiate into early stage chondrocytes: SOX5 and SOX6 cooperatively bind with SOX9 on active enhancers and super-enhancers associated with cartilage-specific genes, and thereby potentiate SOX9's ability to transactivate. Not involved in precartilaginous condensation, the first step in chondrogenesis, during which skeletal progenitors differentiate into prechondrocytes. Together with SOX5, required to form and maintain a pool of highly proliferating chondroblasts between epiphyses and metaphyses, to form columnar chondroblasts, delay chondrocyte prehypertrophy but promote hypertrophy, and to delay terminal differentiation of chondrocytes on contact with ossification fronts. Binds to the proximal promoter region of the myelin protein MPZ gene, and is thereby involved in the differentiation of oligodendroglia in the developing spinal tube. Binds to the gene promoter of MBP and acts as a transcriptional repressor. The polypeptide is Transcription factor SOX-6 (Homo sapiens (Human)).